A 497-amino-acid polypeptide reads, in one-letter code: O-acetyltransferase PaAT-1 (497 aa).

The N-linked (GlcNAc...) asparagine glycan is linked to asparagine 35. Helical transmembrane passes span 69 to 89 (GISA…GWHI), 107 to 127 (LLIS…YSLS), 157 to 177 (LFVP…LNWY), 241 to 261 (LWTL…LMAF), 278 to 298 (VLFQ…GMLI), 329 to 349 (AIGV…HLAF), 375 to 395 (PIAA…QVLF), 406 to 426 (ISFA…HALG), and 443 to 463 (VAIS…ADFV).

It belongs to the acyltransferase 3 family.

The protein localises to the membrane. It participates in mycotoxin biosynthesis. Its function is as follows. O-acetyltransferase; part of the 2 gene clusters that mediate the biosynthesis of fusicoccins, diterpene glucosides that display phytohormone-like activity and function as potent activators of plasma membrane H(+)-ATPases in plants by modifying 14-3-3 proteins and cause the plant disease constriction canker. The first step in the pathway is performed by the fusicoccadiene synthase PaFS that possesses both prenyl transferase and terpene cyclase activity, converting isopentenyl diphosphate and dimethylallyl diphosphate into geranylgeranyl diphosphate (GGDP) and successively converting GGDP into fusicocca-2,10(14)-diene, a precursor for fusicoccin H. The second step is the oxidation at the C-8 position by the cytochrome P450 monooxygenase PaP450-2 to yield fusicocca-2,10(14)-diene-8-beta-ol. The cytochrome P450 monooxygenase PaP450-1 then catalyzes the hydroxylation at the C-16 position to produce fusicocca-2,10(14)-diene-8-beta,16-diol. The dioxygenase fc-dox then catalyzes the 16-oxydation of fusicocca-2,10(14)-diene-8-beta,16-diol to yield an aldehyde (8-beta-hydroxyfusicocca-1,10(14)-dien-16-al). The short-chain dehydrogenase/reductase fc-sdr catalyzes the reduction of the aldehyde to yield fusicocca-1,10(14)-diene-8-beta,16-diol. The next step is the hydroxylation at C-9 performed by the cytochrome P450 monooxygenase PaP450-3 that leads to fusicoccin H aglycon which is glycosylated to fusicoccin H by the O-glycosyltransferase PaGT. Hydroxylation at C-12 by the cytochrome P450 monooxygenase PaP450-4 leads then to the production of fusicoccin Q and is followed by methylation by the O-methyltransferase PaMT to yield fusicoccin P. Fusicoccin P is further converted to fusicoccin J via prenylation by the O-glucose prenyltransferase PaPT. Cytochrome P450 monooxygenase PaP450-5 then performs hydroxylation at C-19 to yield dideacetyl-fusicoccin A which is acetylated to 3'-O-deacetyl-fusicoccin A by the O-acetyltransferase PaAT-2. Finally, a another acetylation by the O-acetyltransferase PaAT-1 yields fusicoccin A. This Phomopsis amygdali (Fusicoccum amygdali) protein is O-acetyltransferase PaAT-1.